The chain runs to 447 residues: MKVIVLGSSHGGYEAVEELLNLHPDAEIQWYEKGDFISFLSCGMQLYLEGKVKDVNSVRYMTGEKMESRGVNVFSNTEITAIQPKEHQVTVKDLVSGEERVENYDKLIISPGAVPFELDIPGKDLDNIYLMRGRQWAIKLKQKTVDPEVNNVVVIGSGYIGIEAAEAFAKAGKKVTVIDILDRPLGVYLDKEFTDVLTEEMEANNITIATGETVERYEGDGRVQKIVTDKNAYDADLVVVAVGVRPNTAWLKGTLELHPNGLIKTDEYMRTSEPDVFAVGDATLIKYNPADTEVNIALATNARKQGRFAVKNLEEPVKPFPGVQGSSGLAVFDYKFASTGINEVMAQKLGKETKAVTVVEDYLMDFNPDKQKAWFKLVYDPETTQILGAQLMSKADLTANINAISLAIQAKMTIEDLAYADFFFQPAFDKPWNIINTAALEAVKQER.

Residues 7-11, E32, C42, 110-113, and R132 each bind FAD; these read GSSHG and SPGA. H10 serves as the catalytic Proton acceptor. C42 acts as the Redox-active in catalysis. Residue C42 is modified to Cysteine sulfenic acid (-SOH). NAD(+)-binding residues include I160, D179, Y188, and G243. Residue D281 coordinates FAD. An NAD(+)-binding site is contributed by A297. A299 serves as a coordination point for FAD. An NAD(+)-binding site is contributed by G328.

This sequence belongs to the class-III pyridine nucleotide-disulfide oxidoreductase family. As to quaternary structure, homotetramer. FAD is required as a cofactor.

It catalyses the reaction H2O2 + NADH + H(+) = NAD(+) + 2 H2O. In terms of biological role, peroxidase whose active site is a redox-active cysteine-sulfenic acid. The chain is NADH peroxidase (npr) from Enterococcus faecalis (strain ATCC 700802 / V583).